The primary structure comprises 205 residues: Large ribosomal subunit protein uL3c (205 aa).

The interval R130 to T150 is disordered.

This sequence belongs to the universal ribosomal protein uL3 family. Part of the 50S ribosomal subunit.

It localises to the plastid. The protein localises to the chloroplast. In terms of biological role, one of the primary rRNA binding proteins, it binds directly near the 3'-end of the 23S rRNA, where it nucleates assembly of the 50S subunit. The sequence is that of Large ribosomal subunit protein uL3c (rpl3) from Gracilaria tenuistipitata var. liui (Red alga).